A 596-amino-acid chain; its full sequence is Putative terpene synthase 3, chloroplastic (596 aa).

Residues 1 to 46 (MATLSMQVSTLSKQVKNLNTFGMGSASKLPMVARRVSTIRLRPICS) constitute a chloroplast transit peptide. Mn(2+)-binding residues include aspartate 349 and aspartate 353. Positions 349–353 (DDVYD) match the DDXXD motif motif. Homodimerization stretches follow at residues 355–361 (YGTLDEL) and 427–464 (EAKW…FTLP). Mn(2+) contacts are provided by aspartate 493 and glutamate 501.

It belongs to the terpene synthase family. As to quaternary structure, homodimer. The cofactor is Mn(2+). It depends on Mg(2+) as a cofactor.

It localises to the plastid. The protein localises to the chloroplast. The protein operates within secondary metabolite biosynthesis; terpenoid biosynthesis. Its function is as follows. Putative monoterpene synthase. The chain is Putative terpene synthase 3, chloroplastic from Thymus vulgaris (Thyme).